Consider the following 190-residue polypeptide: Protein shisa-like-2A (190 aa).

The next 2 helical transmembrane spans lie at 48–68 (SFFPYEHSYMWWLSIGALIGL) and 70–90 (VAAVVLLAFIVTACVLCYLFI).

This sequence belongs to the shisa family.

Its subcellular location is the membrane. This Homo sapiens (Human) protein is Protein shisa-like-2A.